A 273-amino-acid chain; its full sequence is Undecaprenyl-diphosphatase (273 aa).

Helical transmembrane passes span 6–26 (SLLI…LPVS), 45–65 (AKTF…VMFW), 90–110 (LTLI…LLFH), 116–136 (LFNP…LIAA), 190–210 (YAAS…ATAL), 222–242 (GDIP…LIAI), and 252–272 (ISFI…YVVF).

Belongs to the UppP family.

Its subcellular location is the cell inner membrane. It carries out the reaction di-trans,octa-cis-undecaprenyl diphosphate + H2O = di-trans,octa-cis-undecaprenyl phosphate + phosphate + H(+). Functionally, catalyzes the dephosphorylation of undecaprenyl diphosphate (UPP). Confers resistance to bacitracin. This Escherichia coli O157:H7 protein is Undecaprenyl-diphosphatase.